The primary structure comprises 509 residues: 2-isopropylmalate synthase (509 aa).

Residues 4–266 (VRIFDTTLRD…YTGIKTEEIY (263 aa)) enclose the Pyruvate carboxyltransferase domain. Mn(2+)-binding residues include Asp13, His201, His203, and Asn237. The regulatory domain stretch occupies residues 390–509 (TLDYFHISTG…FDYQAKGEKQ (120 aa)).

It belongs to the alpha-IPM synthase/homocitrate synthase family. LeuA type 1 subfamily. As to quaternary structure, homodimer. It depends on Mn(2+) as a cofactor.

The protein resides in the cytoplasm. It carries out the reaction 3-methyl-2-oxobutanoate + acetyl-CoA + H2O = (2S)-2-isopropylmalate + CoA + H(+). The protein operates within amino-acid biosynthesis; L-leucine biosynthesis; L-leucine from 3-methyl-2-oxobutanoate: step 1/4. Catalyzes the condensation of the acetyl group of acetyl-CoA with 3-methyl-2-oxobutanoate (2-ketoisovalerate) to form 3-carboxy-3-hydroxy-4-methylpentanoate (2-isopropylmalate). The protein is 2-isopropylmalate synthase of Carboxydothermus hydrogenoformans (strain ATCC BAA-161 / DSM 6008 / Z-2901).